A 352-amino-acid chain; its full sequence is Small glutamine-rich tetratricopeptide repeat-containing protein 2 (352 aa).

Over residues 80 to 97 (PAAASSSSTAPAAAAATP) the composition is skewed to low complexity. The segment at 80–103 (PAAASSSSTAPAAAAATPSDEDLA) is disordered. TPR repeat units follow at residues 105–138 (AEQL…NPNS), 140–172 (VYFS…DPKF), and 173–206 (GKAY…DPSN). The segment at 217–236 (KEQLSSSSSSNANDATASRG) is disordered.

It belongs to the SGT family.

In terms of biological role, co-chaperone that binds to the molecular chaperone Hsp70 and regulates Hsp70 ATPase activity. This chain is Small glutamine-rich tetratricopeptide repeat-containing protein 2, found in Mycosarcoma maydis (Corn smut fungus).